Here is a 434-residue protein sequence, read N- to C-terminus: Nicotinate phosphoribosyltransferase (434 aa).

At His-242 the chain carries Phosphohistidine; by autocatalysis.

It belongs to the NAPRTase family. In terms of processing, transiently phosphorylated on a His residue during the reaction cycle. Phosphorylation strongly increases the affinity for substrates and increases the rate of nicotinate D-ribonucleotide production. Dephosphorylation regenerates the low-affinity form of the enzyme, leading to product release.

The catalysed reaction is nicotinate + 5-phospho-alpha-D-ribose 1-diphosphate + ATP + H2O = nicotinate beta-D-ribonucleotide + ADP + phosphate + diphosphate. It participates in cofactor biosynthesis; NAD(+) biosynthesis; nicotinate D-ribonucleotide from nicotinate: step 1/1. Its function is as follows. Catalyzes the synthesis of beta-nicotinate D-ribonucleotide from nicotinate and 5-phospho-D-ribose 1-phosphate at the expense of ATP. This chain is Nicotinate phosphoribosyltransferase, found in Rhizobium etli (strain ATCC 51251 / DSM 11541 / JCM 21823 / NBRC 15573 / CFN 42).